We begin with the raw amino-acid sequence, 379 residues long: Homoserine O-succinyltransferase (379 aa).

One can recognise an AB hydrolase-1 domain in the interval 51–360; it reads NAVLICHALS…DSPYGHDAFL (310 aa). The active-site Nucleophile is Ser-157. Arg-227 serves as a coordination point for substrate. Active-site residues include Asp-323 and His-356. Asp-357 provides a ligand contact to substrate.

This sequence belongs to the AB hydrolase superfamily. MetX family. Homodimer.

It is found in the cytoplasm. It carries out the reaction L-homoserine + succinyl-CoA = O-succinyl-L-homoserine + CoA. It functions in the pathway amino-acid biosynthesis; L-methionine biosynthesis via de novo pathway; O-succinyl-L-homoserine from L-homoserine: step 1/1. In terms of biological role, transfers a succinyl group from succinyl-CoA to L-homoserine, forming succinyl-L-homoserine. The chain is Homoserine O-succinyltransferase from Pseudomonas putida (strain W619).